We begin with the raw amino-acid sequence, 293 residues long: 33 kDa chaperonin (293 aa).

Intrachain disulfides connect Cys-239–Cys-241 and Cys-272–Cys-275.

The protein belongs to the HSP33 family. In terms of processing, under oxidizing conditions two disulfide bonds are formed involving the reactive cysteines. Under reducing conditions zinc is bound to the reactive cysteines and the protein is inactive.

The protein localises to the cytoplasm. Its function is as follows. Redox regulated molecular chaperone. Protects both thermally unfolding and oxidatively damaged proteins from irreversible aggregation. Plays an important role in the bacterial defense system toward oxidative stress. In Limosilactobacillus fermentum (strain NBRC 3956 / LMG 18251) (Lactobacillus fermentum), this protein is 33 kDa chaperonin.